Here is a 166-residue protein sequence, read N- to C-terminus: Holin-like protein TcdE (166 aa).

The next 4 membrane-spanning stretches (helical) occupy residues 15-35, 36-56, 77-97, and 111-131; these read IFFY…LSEH, IFIK…CLSA, MIAC…NFLF, and HLGI…VSIL.

The protein belongs to the bacteriophage holin family. Homomultimer.

Its subcellular location is the cell membrane. Functionally, holin-like protein required for secretion of toxins A and B (TcdA and TcdB). Facilitates the release of toxins to the extracellular environment without causing the bacterial cell lysis. Has weak activity, suggesting that it may act as a antiholin when multiple forms are produced. The sequence is that of Holin-like protein TcdE from Clostridioides difficile (Peptoclostridium difficile).